Reading from the N-terminus, the 230-residue chain is ATP-dependent dethiobiotin synthetase BioD (230 aa).

12–17 lines the ATP pocket; that stretch reads DVGKTV. T16 provides a ligand contact to Mg(2+). Residue K37 is part of the active site. A substrate-binding site is contributed by T41. ATP-binding positions include D49, 108-111, 168-169, and 198-200; these read EGAG, GS, and PEG. Residues D49 and E108 each coordinate Mg(2+).

Belongs to the dethiobiotin synthetase family. Homodimer. Mg(2+) serves as cofactor.

It localises to the cytoplasm. The enzyme catalyses (7R,8S)-7,8-diammoniononanoate + CO2 + ATP = (4R,5S)-dethiobiotin + ADP + phosphate + 3 H(+). The protein operates within cofactor biosynthesis; biotin biosynthesis; biotin from 7,8-diaminononanoate: step 1/2. In terms of biological role, catalyzes a mechanistically unusual reaction, the ATP-dependent insertion of CO2 between the N7 and N8 nitrogen atoms of 7,8-diaminopelargonic acid (DAPA, also called 7,8-diammoniononanoate) to form a ureido ring. The chain is ATP-dependent dethiobiotin synthetase BioD from Corynebacterium kroppenstedtii (strain DSM 44385 / JCM 11950 / CIP 105744 / CCUG 35717).